The sequence spans 149 residues: Large ribosomal subunit protein bL9 (149 aa).

This sequence belongs to the bacterial ribosomal protein bL9 family.

Binds to the 23S rRNA. This is Large ribosomal subunit protein bL9 from Campylobacter curvus (strain 525.92).